A 1174-amino-acid chain; its full sequence is ATP-dependent DNA helicase SRS2 (1174 aa).

Residues 14–316 enclose the UvrD-like helicase ATP-binding domain; the sequence is QLNTQQRAAA…IILVENYRSS (303 aa). Residue 38–43 participates in ATP binding; the sequence is GTGKTK. The tract at residues 222–243 is leucine-zipper; that stretch reads LLMYTFRLLTRVRVLSNIKHVL. An ATP-binding site is contributed by arginine 314. A UvrD-like helicase C-terminal domain is found at 317–654; the sequence is QKILNTSEIL…TISTIHGAKG (338 aa). The segment at 676-704 is disordered; the sequence is DDKKDESEEDEEEDQENSKKDASPKKTRV. Position 833 is a phosphoserine (serine 833). 3 disordered regions span residues 865–896, 909–973, and 994–1024; these read SKIN…SPTK, NVPS…DKVT, and ELHP…SNSD. Composition is skewed to polar residues over residues 909–922 and 935–955; these read NVPS…STGK and TDIS…NKTS. Positions 956–973 are enriched in basic and acidic residues; it reads HMSDDLMRPSPTRKDKVT. A compositionally biased stretch (low complexity) spans 1007 to 1023; sequence SLTSSEFSGFSSACSNS.

It belongs to the helicase family. UvrD subfamily.

It is found in the nucleus. It catalyses the reaction Couples ATP hydrolysis with the unwinding of duplex DNA by translocating in the 3'-5' direction.. It carries out the reaction ATP + H2O = ADP + phosphate + H(+). In terms of biological role, ATP-dependent DNA helicase involved in DNA repair at least for UV-induced lesions. The polarity of the helicase activity was determined to be 3' to 5'. In Saccharomyces cerevisiae (strain ATCC 204508 / S288c) (Baker's yeast), this protein is ATP-dependent DNA helicase SRS2 (SRS2).